A 446-amino-acid polypeptide reads, in one-letter code: Glutamyl-tRNA reductase (446 aa).

Residues 49-52, Ser-109, 114-116, and Gln-120 each bind substrate; these read TCNR and ETQ. Cys-50 functions as the Nucleophile in the catalytic mechanism. Residue 189–194 coordinates NADP(+); that stretch reads GAGEMA.

The protein belongs to the glutamyl-tRNA reductase family. As to quaternary structure, homodimer.

The enzyme catalyses (S)-4-amino-5-oxopentanoate + tRNA(Glu) + NADP(+) = L-glutamyl-tRNA(Glu) + NADPH + H(+). It participates in porphyrin-containing compound metabolism; protoporphyrin-IX biosynthesis; 5-aminolevulinate from L-glutamyl-tRNA(Glu): step 1/2. Functionally, catalyzes the NADPH-dependent reduction of glutamyl-tRNA(Glu) to glutamate 1-semialdehyde (GSA). The sequence is that of Glutamyl-tRNA reductase from Macrococcus caseolyticus (strain JCSC5402) (Macrococcoides caseolyticum).